The primary structure comprises 361 residues: DNA replication and repair protein RecF (361 aa).

Residue 30–37 (GPNGSGKT) coordinates ATP.

The protein belongs to the RecF family.

Its subcellular location is the cytoplasm. Its function is as follows. The RecF protein is involved in DNA metabolism; it is required for DNA replication and normal SOS inducibility. RecF binds preferentially to single-stranded, linear DNA. It also seems to bind ATP. The chain is DNA replication and repair protein RecF from Yersinia pestis.